Reading from the N-terminus, the 504-residue chain is Carnosic acid synthase (504 aa).

The chain crosses the membrane as a helical span at residues 4–24 (FIILSLAFIAAWVVYSRWSEY). Cysteine 447 contacts heme.

This sequence belongs to the cytochrome P450 family. Heme serves as cofactor. In terms of tissue distribution, expressed in glandular trichomes of young leaves.

It is found in the membrane. The catalysed reaction is 11-hydroxyferruginol + 3 reduced [NADPH--hemoprotein reductase] + 3 O2 = carnosate + 3 oxidized [NADPH--hemoprotein reductase] + 4 H2O + 4 H(+). It carries out the reaction miltiradiene + 2 reduced [NADPH--hemoprotein reductase] + 2 O2 = miltiradien-20-al + 2 oxidized [NADPH--hemoprotein reductase] + 3 H2O + 2 H(+). It catalyses the reaction ferruginol + 3 reduced [NADPH--hemoprotein reductase] + 3 O2 = pisiferate + 3 oxidized [NADPH--hemoprotein reductase] + 4 H2O + 4 H(+). It participates in secondary metabolite biosynthesis; terpenoid biosynthesis. Its function is as follows. Monooxygenase involved in the biosynthesis of carnosate, a potent antioxidant labdane-related diterpene natural products. Catalyzes the oxidation of 11-hydroxyferruginol to produce carnosate. Mediates the conversion of miltiradien into miltiradien-20-al. Also involved in the production of pisiferic acid and derivative products from ferruginol. The polypeptide is Carnosic acid synthase (Rosmarinus officinalis (Rosemary)).